We begin with the raw amino-acid sequence, 663 residues long: Alpha-amylase MalA (663 aa).

Disordered stretches follow at residues 1 to 28 (MHHP…PTAT) and 80 to 135 (GTLE…LTLR). A compositionally biased stretch (gly residues) spans 92 to 111 (RSGGHSGGVSGGRSGPGRSG). D411 functions as the Nucleophile in the catalytic mechanism. The active-site Proton donor is E440.

Belongs to the glycosyl hydrolase 13 family.

It is found in the cytoplasm. The catalysed reaction is Endohydrolysis of (1-&gt;4)-alpha-D-glucosidic linkages in polysaccharides containing three or more (1-&gt;4)-alpha-linked D-glucose units.. It participates in glycan degradation; starch degradation. With respect to regulation, stable and active over a broad range of NaCl concentrations (0.5 to 4.2 M NaCl), with maximal activity at 2.6 M NaCl. 83% and 94% of the maximum activity at 0.6 and 4.2 M NaCl, respectively. Active and stable also in KCl. In terms of biological role, alpha-amylase that cleaves starch into oligosaccharides, the first step in starch degradation. Endo-acting enzyme which prefers a linear polysaccharide to branched polysaccharides hydrolyzing alpha-1,4 glucosidic bonds efficiently. Also has transglycosylation activity, but does not act on alpha-1,6 bonds. Higher activities of 100%, 79% and 67.8% against amylose, soluble starch and amylopectin, respectively. Lower activity of 22% against glycogen and faint or no activity against alpha-, beta- and gamma-cyclodextrin. The sequence is that of Alpha-amylase MalA from Haloarcula japonica (strain ATCC 49778 / DSM 6131 / JCM 7785 / NBRC 101032 / NCIMB 13157 / TR-1).